Reading from the N-terminus, the 250-residue chain is 3-deoxy-manno-octulosonate cytidylyltransferase (250 aa).

It belongs to the KdsB family.

The protein resides in the cytoplasm. The enzyme catalyses 3-deoxy-alpha-D-manno-oct-2-ulosonate + CTP = CMP-3-deoxy-beta-D-manno-octulosonate + diphosphate. Its pathway is nucleotide-sugar biosynthesis; CMP-3-deoxy-D-manno-octulosonate biosynthesis; CMP-3-deoxy-D-manno-octulosonate from 3-deoxy-D-manno-octulosonate and CTP: step 1/1. It functions in the pathway bacterial outer membrane biogenesis; lipopolysaccharide biosynthesis. Its function is as follows. Activates KDO (a required 8-carbon sugar) for incorporation into bacterial lipopolysaccharide in Gram-negative bacteria. In Janthinobacterium sp. (strain Marseille) (Minibacterium massiliensis), this protein is 3-deoxy-manno-octulosonate cytidylyltransferase.